Consider the following 144-residue polypeptide: Endoribonuclease YbeY (144 aa).

Zn(2+) is bound by residues His108, His112, and His118.

Belongs to the endoribonuclease YbeY family. Zn(2+) serves as cofactor.

Its subcellular location is the cytoplasm. Single strand-specific metallo-endoribonuclease involved in late-stage 70S ribosome quality control and in maturation of the 3' terminus of the 16S rRNA. In Phytoplasma australiense, this protein is Endoribonuclease YbeY.